The primary structure comprises 177 residues: Large ribosomal subunit protein uL6 (177 aa).

It belongs to the universal ribosomal protein uL6 family. In terms of assembly, part of the 50S ribosomal subunit.

In terms of biological role, this protein binds to the 23S rRNA, and is important in its secondary structure. It is located near the subunit interface in the base of the L7/L12 stalk, and near the tRNA binding site of the peptidyltransferase center. The sequence is that of Large ribosomal subunit protein uL6 from Methylococcus capsulatus (strain ATCC 33009 / NCIMB 11132 / Bath).